The chain runs to 540 residues: 2-isopropylmalate synthase (540 aa).

The Pyruvate carboxyltransferase domain maps to 8-271 (VLIFDTTLRD…NPFFGRESDS (264 aa)). Mn(2+) is bound by residues Asp17, His208, His210, and Asn244. Residues 408–540 (QLRLVQVSCG…AVLADRRPGI (133 aa)) form a regulatory domain region.

Belongs to the alpha-IPM synthase/homocitrate synthase family. LeuA type 1 subfamily. In terms of assembly, homodimer. The cofactor is Mn(2+).

Its subcellular location is the cytoplasm. It catalyses the reaction 3-methyl-2-oxobutanoate + acetyl-CoA + H2O = (2S)-2-isopropylmalate + CoA + H(+). It functions in the pathway amino-acid biosynthesis; L-leucine biosynthesis; L-leucine from 3-methyl-2-oxobutanoate: step 1/4. Catalyzes the condensation of the acetyl group of acetyl-CoA with 3-methyl-2-oxobutanoate (2-ketoisovalerate) to form 3-carboxy-3-hydroxy-4-methylpentanoate (2-isopropylmalate). The chain is 2-isopropylmalate synthase from Prochlorococcus marinus (strain MIT 9303).